Consider the following 239-residue polypeptide: O-methyltransferase ankF (239 aa).

S-adenosyl-L-methionine contacts are provided by residues E71, 73 to 74 (GT), S79, E98, and A127.

Belongs to the class I-like SAM-binding methyltransferase superfamily. Cation-dependent O-methyltransferase family.

The catalysed reaction is NK13650 B + S-adenosyl-L-methionine = NK13650 D + S-adenosyl-L-homocysteine + H(+). Its pathway is secondary metabolite biosynthesis. Functionally, O-methyltransferase; part of the ank cluster that mediates the biosynthesis of NK13650 C, a highly modified cyclo-arginine-tyrosine dipeptide. AnkF converts NK13650 B to produce NK13650 D via methylation of the C-17 phenol group. Within the pathway, the cyclodipeptide synthase ankA acts as the scaffold-generating enzyme and is responsible for formation of the cyclo-Arg-Tyr diketopiperazine (cRY) from L-Arg and L-Tyr. The ankA product cRY is desaturated by the cytochrome P450 monooxygenase ankB to yield a dehydro-cyclodipeptide intermediate. The FAD-dependent monooxygenase ankC then installs the m-OH, ankD catalyzes the attachment of L-homoserine, and ankE ligates citrate to the ankD product to yield NK13650 B. The O-methyltransferase ankF is responsible for methylation of the C-17 phenol group of NK13650 B to produce NK13650 D. Amidation of NK13650 D with L-Asp by ankG then leads to the production of NK13650 C, whereas amidation of NK13650 B produces NK13650 A. This Aspergillus thermomutatus (Neosartorya pseudofischeri) protein is O-methyltransferase ankF.